Here is a 35-residue protein sequence, read N- to C-terminus: Sperm protamine alpha isoform 2 (35 aa).

The segment at Met1–Arg35 is disordered. Phosphoserine occurs at positions 9 and 21.

In terms of processing, phosphorylated in immature sperm. Dephosphorylated in mature sperm allowing a stronger interaction with DNA. In terms of tissue distribution, gonads.

The protein resides in the nucleus. It is found in the chromosome. In terms of biological role, protamines substitute for histones in the chromatin of sperm during the haploid phase of spermatogenesis. They compact sperm DNA into a highly condensed, stable and inactive complex. This Scomber scombrus (Atlantic mackerel) protein is Sperm protamine alpha isoform 2.